A 358-amino-acid polypeptide reads, in one-letter code: G-protein coupled receptor 20 (358 aa).

Topologically, residues 1-48 (MPSVSPAGPSAGAVPNATAVTTVRTNASGLEVPLFHLFARLDEELHGT) are extracellular. N-linked (GlcNAc...) asparagine glycans are attached at residues Asn16 and Asn26. A helical transmembrane segment spans residues 49 to 69 (FPGLWLALMAVHGAIFLAGLV). At 70 to 86 (LNGLALYVFCCRTRAKT) the chain is on the cytoplasmic side. The helical transmembrane segment at 87–107 (PSVIYTINLVVTDLLVGLSLP) threads the bilayer. Topologically, residues 108 to 125 (TRFAVYYGARGCLRCAFP) are extracellular. Residues 126-146 (HVLGYFLNMHCSILFLTCICV) form a helical membrane-spanning segment. Over 147 to 168 (DRYLAIVRPEGSRRCRQPACAR) the chain is Cytoplasmic. Residues 169-189 (AVCAFVWLAAGAVTLSVLGVT) traverse the membrane as a helical segment. Over 190 to 196 (GSRPCCR) the chain is Extracellular. The chain crosses the membrane as a helical span at residues 197–217 (VFALTVLEFLLPLLVISVFTG). At 218-238 (RIMCALSRPGLLHQGRQRRVR) the chain is on the cytoplasmic side. A helical membrane pass occupies residues 239–259 (AMQLLLTVLIIFLVCFTPFHA). The Extracellular segment spans residues 260-275 (RQVAVALWPDMPHHTS). The chain crosses the membrane as a helical span at residues 276 to 296 (LVVYHVAVTLSSLNSCMDPIV). At 297–358 (YCFVTSGFQA…TQALANGPEA (62 aa)) the chain is on the cytoplasmic side. The disordered stretch occupies residues 315 to 339 (HGEREPSSGDVVSMHRSSKGSGRHH). Over residues 330–339 (RSSKGSGRHH) the composition is skewed to basic residues.

The protein belongs to the G-protein coupled receptor 1 family. As to expression, ubiquitous with highest levels in intestinal tissues. In the brain detected in thalamus, putamen, and caudate, but not in frontal cortex, pons and hypothalamus.

The protein localises to the cell membrane. In terms of biological role, orphan receptor with constitutive G(i) signaling activity that activate cyclic AMP. In Homo sapiens (Human), this protein is G-protein coupled receptor 20 (GPR20).